The chain runs to 185 residues: uncharacterized protein (185 aa).

3 helical membrane-spanning segments follow: residues 9–29 (LVAAGLVLHIIQWIFILWAFL), 72–92 (VLFFALVLLIYGIVLHAILIV), and 111–131 (FFFIAAGVKLAILNITGIPFL).

It is found in the cell membrane. This is an uncharacterized protein from Bacillus subtilis (strain 168).